The following is a 397-amino-acid chain: MQSLTILGSTGSIGKATLSVIQQHTDKFFVHALVAKNNVAIMTEQCIAMSPKYACMISEDAARILKKNLITAGKYDIEVLSGVMHACELASTNDVDMVMSAIVGIAGLKPTFSALRAGKKILLANKETLVTGGKLFMKEANRYRACILPIDSEHNAIFQNLPEICQKSLGNTSLSECGISRIVLTASGGIFFKTPQKQLTKITPEQACVHPNWSMGRKISVDSATMMNKGLEYIEARHLFNAKPSEIEILLHPQSIVHAMVYYSDGNVLAHLAPPDMRIPIAYAMAYPKRIGLKISSNIDIYYLNKLHFDQLDNCSYPCFQLAIDADNCSQSATIILNAANEIAVEAFLRKMISFTDIPDVIRRVLDAINLNDPNDIEDILYIDQKAREKAISICVI.

6 residues coordinate NADPH: Thr10, Gly11, Ser12, Ile13, Asn38, and Asn125. Position 126 (Lys126) interacts with 1-deoxy-D-xylulose 5-phosphate. NADPH is bound at residue Glu127. Residue Asp151 coordinates Mn(2+). Residues Ser152, Glu153, Ser187, and His210 each coordinate 1-deoxy-D-xylulose 5-phosphate. Residue Glu153 participates in Mn(2+) binding. Residue Gly216 coordinates NADPH. The 1-deoxy-D-xylulose 5-phosphate site is built by Ser223, Asn228, Lys229, and Glu232. A Mn(2+)-binding site is contributed by Glu232.

This sequence belongs to the DXR family. Homodimer. It depends on Mg(2+) as a cofactor. Requires Mn(2+) as cofactor.

The enzyme catalyses 2-C-methyl-D-erythritol 4-phosphate + NADP(+) = 1-deoxy-D-xylulose 5-phosphate + NADPH + H(+). It participates in isoprenoid biosynthesis; isopentenyl diphosphate biosynthesis via DXP pathway; isopentenyl diphosphate from 1-deoxy-D-xylulose 5-phosphate: step 1/6. Functionally, catalyzes the NADPH-dependent rearrangement and reduction of 1-deoxy-D-xylulose-5-phosphate (DXP) to 2-C-methyl-D-erythritol 4-phosphate (MEP). This is 1-deoxy-D-xylulose 5-phosphate reductoisomerase from Blochmanniella pennsylvanica (strain BPEN).